Reading from the N-terminus, the 1573-residue chain is Soluble scavenger receptor cysteine-rich domain-containing protein SSC5D (1573 aa).

Residues 1–16 form the signal peptide; the sequence is MRVLACLLAALVGIQA. The 101-residue stretch at 20–120 folds into the SRCR 1 domain; that stretch reads LRLADGPHGC…HEEDAGVVCA (101 aa). Cystine bridges form between C45–C109, C58–C119, and C89–C99. The segment at 153-192 is disordered; the sequence is EPLVTHAPRPAGNPQNASRKKSPRPKQAKSTRAPLLTTGA. Residue N168 is glycosylated (N-linked (GlcNAc...) asparagine). A compositionally biased stretch (basic residues) spans 170-181; that stretch reads SRKKSPRPKQAK. 2 consecutive SRCR domains span residues 198-298 and 304-404; these read LRLV…LVCT and LRLA…AVCD. Intrachain disulfides connect C223–C287, C236–C297, C267–C277, C329–C393, C342–C403, and C373–C383. N376 and N420 each carry an N-linked (GlcNAc...) asparagine glycan. The disordered stretch occupies residues 412–465; the sequence is PPTAPTDSNNSTPREAASRPPSTMTSQAPGTAGVSPPPASPTVLWEPGPEAGSP. Residues 431–440 show a composition bias toward polar residues; sequence PPSTMTSQAP. The SRCR 4 domain occupies 467-568; the sequence is LRLVAGPSKC…HNEDVGVTCT (102 aa). 3 cysteine pairs are disulfide-bonded: C492/C557, C505/C567, and C537/C547. The interval 614 to 769 is disordered; that stretch reads EKTTTKAPGK…SVSTTGESGL (156 aa). Positions 626–637 are enriched in basic residues; that stretch reads KSTKKWVTKNAK. Over residues 654–671 the composition is skewed to polar residues; the sequence is AQSPPDLTSQTTAALTTE. Positions 672–685 are enriched in basic and acidic residues; it reads ASRRPTSEFTRRPT. Composition is skewed to polar residues over residues 687–702 and 711–735; these read EAPQRWTSHTTATLTP and KTMAMLTTQGPQEMTSESTIKSIPQ. The region spanning 772–872 is the SRCR 5 domain; the sequence is VRLADGPNRC…HEEDVGLTCT (101 aa). 3 disulfides stabilise this stretch: C797–C861, C810–C871, and C841–C851. Disordered stretches follow at residues 895–1475 and 1554–1573; these read KGTT…PCVA and MPAPTTTTPEEEERPLRGDV. Residues 924–934 are compositionally biased toward basic and acidic residues; the sequence is RLPDTGSKDGY. 2 stretches are compositionally biased toward pro residues: residues 1004-1020 and 1083-1093; these read PPTPSPGPSASPGPPGP and TPEPSPTPLPT. Polar residues predominate over residues 1101 to 1140; it reads DPSTPSEVTSLSPTSEQVPESDTTPDLDTTPYSSTVSEYS. The span at 1144 to 1160 shows a compositional bias: pro residues; sequence DPSPSPHPTTTPDPTMA. Low complexity-rich tracts occupy residues 1161-1175 and 1185-1277; these read PDPITTLNPTVTPHF and PHPT…MPHP. Over residues 1278-1328 the composition is skewed to pro residues; it reads TTTPHPTTTPHPTTTPHPTTTPHPTMTPDPTTTPYPTTTPDPTTTPHPTTP. Polar residues-rich tracts occupy residues 1335 to 1354 and 1364 to 1380; these read VITTVSLPTSLGTELSSPTL and PQLTFTAPAPHTSTSQI. The span at 1381–1401 shows a compositional bias: low complexity; the sequence is PTLEPSPALESSPSRSSTATS. Pro residues predominate over residues 1464–1475; that stretch reads GQSPGPHGPCVA.

As to quaternary structure, interacts with LGALS1 and laminin. In terms of tissue distribution, highly expressed in monocytes/macrophages and T-lymphocytes. Highly expressed in placenta and spleen, and also detected at lower levels in colon, and more weakly in lung, heart and kidney.

It is found in the secreted. It localises to the cytoplasm. Functionally, binds to extracellular matrix proteins. Binds to pathogen-associated molecular patterns (PAMPs) present on the cell walls of Gram-positive and Gram-negative bacteria and fungi, behaving as a pattern recognition receptor (PRR). Induces bacterial and fungal aggregation and subsequent inhibition of PAMP-induced cytokine release. Does not possess intrinsic bactericidal activity. May play a role in the innate defense and homeostasis of certain epithelial surfaces. The chain is Soluble scavenger receptor cysteine-rich domain-containing protein SSC5D (SSC5D) from Homo sapiens (Human).